The chain runs to 941 residues: PHD finger protein 14 (941 aa).

Residues 22–295 (DYDSSDDSDF…LSQSKSNEDS (274 aa)) are disordered. Residues Ser-26 and Ser-29 each carry the phosphoserine modification. Residues 36 to 47 (ASDSEGSGNGSE) show a composition bias toward low complexity. Acidic residues predominate over residues 60–72 (DSEENILEEELNE). Composition is skewed to basic and acidic residues over residues 74–85 (IQVKEEQLKNST), 94–109 (QLIK…NGER), and 116–132 (KEKE…EKAT). Ser-84 carries the post-translational modification Phosphoserine. Positions 133-166 (VSDSAAASAAGTTPATSPPAVTSPSVPTTTTTTT) are enriched in low complexity. Ser-189 carries the phosphoserine modification. Composition is skewed to acidic residues over residues 194–205 (NAMDDYDSEDDN) and 226–249 (DGDN…EGND). Phosphotyrosine is present on Tyr-199. Ser-201 carries the post-translational modification Phosphoserine. Thr-280 is modified (phosphothreonine). Over residues 281 to 290 (NDSLTLSQSK) the composition is skewed to polar residues. Residues Ser-283, Ser-287, Ser-291, Ser-295, and Ser-301 each carry the phosphoserine modification. A PHD-type 1 zinc finger spans residues 312–373 (ILICCVCLGD…PWFCDACKCG (62 aa)). Zn(2+) is bound by residues Cys-315, Cys-318, Cys-332, Cys-335, His-340, and Cys-343. Phosphoserine is present on Ser-352. Positions 367, 370, 378, 381, 398, 401, 434, 437, 451, 456, 461, 464, 488, and 491 each coordinate Zn(2+). Residues 375–408 (SPSCELCPNQDGIFKETDAGRWVHIVCALYVPGV) form a C2HC pre-PHD-type zinc finger. The PHD-type 2 zinc finger occupies 432 to 492 (KECSFCEDPR…PFFAYCKQHA (61 aa)). The residue at position 523 (Ser-523) is a Phosphoserine. The stretch at 623 to 671 (MIQIQENMAEQKNIKDKLENEQEKLHVEYNKLCESLEELQNLNGKLRSE) forms a coiled coil. The PHD-type 3 zinc-finger motif lies at 718-772 (LYSCGICKKNHDQHLLLLCDTCKLHYHLGCLDPPLTRMPRKTKNSYWQCSECDQA). Residues Cys-721, Cys-724, Cys-736, Cys-739, His-744, Cys-747, Cys-766, and Cys-769 each contribute to the Zn(2+) site. Residues Ser-774, Ser-775, and Ser-828 each carry the phosphoserine modification. Residues 804–855 (VPQDVPPEPKKIPIRNTRTRGRKRSFVPEEEKHEERVPRERRQRQSVLQKKP) form a disordered region. Positions 829-843 (FVPEEEKHEERVPRE) are enriched in basic and acidic residues. The segment at 861–914 (RTECSTCKGTGDNENLVRCDECRLCYHFGCLDPPLKKSPKQTGYGWICQECDSS) adopts a PHD-type 4 zinc-finger fold. 8 residues coordinate Zn(2+): Cys-864, Cys-867, Cys-879, Cys-882, His-887, Cys-890, Cys-908, and Cys-911. Positions 912 to 941 (DSSSSKEDENEAEKKNASQELSMEQKTPKK) are disordered. Positions 915–928 (SSKEDENEAEKKNA) are enriched in basic and acidic residues. Polar residues predominate over residues 930-941 (QELSMEQKTPKK).

In terms of tissue distribution, high levels detected in testis, lung and spleen and low levels in muscle, heart, intestine and kidney (at protein level). Widely expressed in adult with increased levels in intestine, colon and lung.

Its subcellular location is the nucleus. It is found in the chromosome. The protein resides in the cytoplasm. Functionally, histone-binding protein. Binds preferentially to unmodified histone H3 but can also bind to a lesser extent to histone H3 trimethylated at 'Lys-9' (H3K9me3) as well as to histone H3 monomethylated at 'Lys-27' (H3K27ac) and trimethylated at 'Lys-27' (H3K27me3). Represses PDGFRA expression, thus playing a role in regulation of mesenchymal cell proliferation. Suppresses the expression of CDKN1A/p21 by reducing the level of trimethylation of histone H3 'Lys-4', leading to enhanced proliferation of germinal center B cells. This chain is PHD finger protein 14 (Phf14), found in Mus musculus (Mouse).